Consider the following 181-residue polypeptide: Isopentenyl-diphosphate Delta-isomerase (181 aa).

Mn(2+)-binding residues include His24 and His30. Positions 28 to 168 constitute a Nudix hydrolase domain; the sequence is LLHLAFSVLL…PDTFSVWFPT (141 aa). The active site involves Cys68. A Mn(2+)-binding site is contributed by His70. Glu88 lines the Mg(2+) pocket. 2 residues coordinate Mn(2+): Glu117 and Glu119. Glu119 is an active-site residue.

Belongs to the IPP isomerase type 1 family. It depends on Mg(2+) as a cofactor. Mn(2+) is required as a cofactor.

The protein resides in the cytoplasm. It catalyses the reaction isopentenyl diphosphate = dimethylallyl diphosphate. It participates in isoprenoid biosynthesis; dimethylallyl diphosphate biosynthesis; dimethylallyl diphosphate from isopentenyl diphosphate: step 1/1. Catalyzes the 1,3-allylic rearrangement of the homoallylic substrate isopentenyl (IPP) to its highly electrophilic allylic isomer, dimethylallyl diphosphate (DMAPP). The chain is Isopentenyl-diphosphate Delta-isomerase from Aliivibrio fischeri (strain MJ11) (Vibrio fischeri).